The sequence spans 90 residues: Small ribosomal subunit protein uS17 (90 aa).

It belongs to the universal ribosomal protein uS17 family. In terms of assembly, part of the 30S ribosomal subunit.

Functionally, one of the primary rRNA binding proteins, it binds specifically to the 5'-end of 16S ribosomal RNA. The polypeptide is Small ribosomal subunit protein uS17 (Burkholderia cenocepacia (strain ATCC BAA-245 / DSM 16553 / LMG 16656 / NCTC 13227 / J2315 / CF5610) (Burkholderia cepacia (strain J2315))).